Here is a 224-residue protein sequence, read N- to C-terminus: LexA repressor (224 aa).

The segment at residues 31 to 51 is a DNA-binding region (H-T-H motif); that stretch reads RAEIAAEFGFKSANAAEEHLQ. Catalysis depends on for autocatalytic cleavage activity residues Ser142 and Lys179.

The protein belongs to the peptidase S24 family. As to quaternary structure, homodimer.

The catalysed reaction is Hydrolysis of Ala-|-Gly bond in repressor LexA.. In terms of biological role, represses a number of genes involved in the response to DNA damage (SOS response), including recA and lexA. In the presence of single-stranded DNA, RecA interacts with LexA causing an autocatalytic cleavage which disrupts the DNA-binding part of LexA, leading to derepression of the SOS regulon and eventually DNA repair. This chain is LexA repressor, found in Paracidovorax citrulli (strain AAC00-1) (Acidovorax citrulli).